The following is a 269-amino-acid chain: Diaminopimelate epimerase (269 aa).

Residues Asn15, Gln49, and Asn66 each coordinate substrate. Cys75 (proton donor) is an active-site residue. Substrate contacts are provided by residues 76–77, Asn155, Asn187, and 204–205; these read GN and ER. Cys213 serves as the catalytic Proton acceptor. 214-215 is a binding site for substrate; the sequence is GS.

Belongs to the diaminopimelate epimerase family. In terms of assembly, homodimer.

The protein resides in the cytoplasm. It carries out the reaction (2S,6S)-2,6-diaminopimelate = meso-2,6-diaminopimelate. The protein operates within amino-acid biosynthesis; L-lysine biosynthesis via DAP pathway; DL-2,6-diaminopimelate from LL-2,6-diaminopimelate: step 1/1. Functionally, catalyzes the stereoinversion of LL-2,6-diaminopimelate (L,L-DAP) to meso-diaminopimelate (meso-DAP), a precursor of L-lysine and an essential component of the bacterial peptidoglycan. The sequence is that of Diaminopimelate epimerase from Rickettsia canadensis (strain McKiel).